Here is a 502-residue protein sequence, read N- to C-terminus: UPF0371 protein CLL_A2797 (502 aa).

It belongs to the UPF0371 family.

The sequence is that of UPF0371 protein CLL_A2797 from Clostridium botulinum (strain Eklund 17B / Type B).